The primary structure comprises 223 residues: Putative N-acetylmannosamine-6-phosphate 2-epimerase (223 aa).

It belongs to the NanE family.

It catalyses the reaction an N-acyl-D-glucosamine 6-phosphate = an N-acyl-D-mannosamine 6-phosphate. Its pathway is amino-sugar metabolism; N-acetylneuraminate degradation; D-fructose 6-phosphate from N-acetylneuraminate: step 3/5. In terms of biological role, converts N-acetylmannosamine-6-phosphate (ManNAc-6-P) to N-acetylglucosamine-6-phosphate (GlcNAc-6-P). This is Putative N-acetylmannosamine-6-phosphate 2-epimerase from Clostridioides difficile (strain 630) (Peptoclostridium difficile).